A 367-amino-acid chain; its full sequence is tRNA pseudouridine synthase D (367 aa).

D80 acts as the Nucleophile in catalysis. Residues 156-316 form the TRUD domain; that stretch reads GIPNWFGEQR…LKQERRALRL (161 aa).

This sequence belongs to the pseudouridine synthase TruD family.

It carries out the reaction uridine(13) in tRNA = pseudouridine(13) in tRNA. Its function is as follows. Responsible for synthesis of pseudouridine from uracil-13 in transfer RNAs. The chain is tRNA pseudouridine synthase D from Xanthomonas campestris pv. campestris (strain B100).